Here is a 391-residue protein sequence, read N- to C-terminus: Eukaryotic initiation factor 4A-3 (391 aa).

A Q motif motif is present at residues 18–46; sequence ASFAEMGIKDDLLRGVYQYGFEKPSAIQQ. Residues 49–219 enclose the Helicase ATP-binding domain; that stretch reads VLPIISGRDV…SKFMTDPVRI (171 aa). 62-69 is a binding site for ATP; that stretch reads AQSGTGKT. The DEAD box motif lies at 167–170; that stretch reads DESD. The Helicase C-terminal domain occupies 230-391; sequence GIKQFFVAVE…EMPMNVADLI (162 aa).

This sequence belongs to the DEAD box helicase family. eIF4A subfamily. In terms of assembly, eIF4F is a multi-subunit complex, the composition of which varies with external and internal environmental conditions. It is composed of at least EIF4A, EIF4E and EIF4G.

The catalysed reaction is ATP + H2O = ADP + phosphate + H(+). Its function is as follows. ATP-dependent RNA helicase which is a subunit of the eIF4F complex involved in cap recognition and is required for mRNA binding to ribosome. In the current model of translation initiation, eIF4A unwinds RNA secondary structures in the 5'-UTR of mRNAs which is necessary to allow efficient binding of the small ribosomal subunit, and subsequent scanning for the initiator codon. The sequence is that of Eukaryotic initiation factor 4A-3 from Nicotiana plumbaginifolia (Leadwort-leaved tobacco).